The following is a 61-amino-acid chain: Small ribosomal subunit protein uS14 (61 aa).

Zn(2+)-binding residues include Cys-24, Cys-27, Cys-40, and Cys-43.

This sequence belongs to the universal ribosomal protein uS14 family. Zinc-binding uS14 subfamily. Part of the 30S ribosomal subunit. Contacts proteins S3 and S10. It depends on Zn(2+) as a cofactor.

Functionally, binds 16S rRNA, required for the assembly of 30S particles and may also be responsible for determining the conformation of the 16S rRNA at the A site. This Desulfatibacillum aliphaticivorans protein is Small ribosomal subunit protein uS14.